Consider the following 453-residue polypeptide: MSQSPKVGFVSLGCPKALVDSEQIITQLRAEGYEISGTYDGADLVVVNTCGFIDEAVQESLDAIGEALTENGKVIVTGCLGAKSSASGSNLIEEVHPKVLAVTGPHAVGEVMQAVHSHLPKPHDPFTDLVPAAGIKLTPRHYAYLKISEGCNHRCTFCIIPSMRGDLVSRPVAEVMLEAENLFKSGVKELLVISQDTSAYGVDVKYRTGFWNGKPIKTRMTDLVAALGELAAQYGAWVRLHYVYPYPSVDEVIPLMAEGPFKGHVLPYLDVPFQHAHPEVLKRMKRPANAEKVLERVQKWREICPDLTIRSTFIAGFPGETEEQFETLLDFIREAELDRVGCFAYSPVEGATANELDGALPDDVREERRARFMEVAEEVSANRIQRKVGKTLKVLIDEVSAEGGIGRTAADAPEIDGVVYVEPAAKASKRYKVGDFVSVKITGADGHDLWGEV.

Residues 5-120 (PKVGFVSLGC…VMQAVHSHLP (116 aa)) enclose the MTTase N-terminal domain. Residues cysteine 14, cysteine 50, cysteine 79, cysteine 151, cysteine 155, and cysteine 158 each coordinate [4Fe-4S] cluster. Residues 137–382 (LTPRHYAYLK…MEVAEEVSAN (246 aa)) form the Radical SAM core domain. Positions 385 to 453 (QRKVGKTLKV…ADGHDLWGEV (69 aa)) constitute a TRAM domain.

This sequence belongs to the methylthiotransferase family. RimO subfamily. Requires [4Fe-4S] cluster as cofactor.

It localises to the cytoplasm. It catalyses the reaction L-aspartate(89)-[ribosomal protein uS12]-hydrogen + (sulfur carrier)-SH + AH2 + 2 S-adenosyl-L-methionine = 3-methylsulfanyl-L-aspartate(89)-[ribosomal protein uS12]-hydrogen + (sulfur carrier)-H + 5'-deoxyadenosine + L-methionine + A + S-adenosyl-L-homocysteine + 2 H(+). Functionally, catalyzes the methylthiolation of an aspartic acid residue of ribosomal protein uS12. The polypeptide is Ribosomal protein uS12 methylthiotransferase RimO (Burkholderia lata (strain ATCC 17760 / DSM 23089 / LMG 22485 / NCIMB 9086 / R18194 / 383)).